A 468-amino-acid polypeptide reads, in one-letter code: ATP synthase subunit beta 2 (468 aa).

145–152 (GGAGVGKT) is an ATP binding site.

Belongs to the ATPase alpha/beta chains family. As to quaternary structure, F-type ATPases have 2 components, CF(1) - the catalytic core - and CF(0) - the membrane proton channel. CF(1) has five subunits: alpha(3), beta(3), gamma(1), delta(1), epsilon(1). CF(0) has three main subunits: a(1), b(2) and c(9-12). The alpha and beta chains form an alternating ring which encloses part of the gamma chain. CF(1) is attached to CF(0) by a central stalk formed by the gamma and epsilon chains, while a peripheral stalk is formed by the delta and b chains.

It localises to the cell membrane. It carries out the reaction ATP + H2O + 4 H(+)(in) = ADP + phosphate + 5 H(+)(out). Functionally, produces ATP from ADP in the presence of a proton gradient across the membrane. The catalytic sites are hosted primarily by the beta subunits. This is ATP synthase subunit beta 2 from Mycoplasmopsis pulmonis (strain UAB CTIP) (Mycoplasma pulmonis).